The following is a 445-amino-acid chain: Tyrosine--tRNA ligase, mitochondrial (445 aa).

Position 33 (tyrosine 33) interacts with L-tyrosine. Aspartate 37 contributes to the ATP binding site. A 'HIGH' region motif is present at residues 38 to 47; the sequence is PTAASLHVGN. Residues aspartate 77, tyrosine 184, glutamine 188, aspartate 191, and glutamine 210 each coordinate L-tyrosine. A 'KMSKS' region motif is present at residues 245–249; that stretch reads KLGKS. Lysine 248 provides a ligand contact to ATP. Residues 384–445 enclose the S4 RNA-binding domain; the sequence is QPFSRLLRTL…GKRTFVLDSL (62 aa).

It belongs to the class-I aminoacyl-tRNA synthetase family. In terms of assembly, homodimer.

It localises to the mitochondrion matrix. It catalyses the reaction tRNA(Tyr) + L-tyrosine + ATP = L-tyrosyl-tRNA(Tyr) + AMP + diphosphate + H(+). Its function is as follows. Catalyzes the attachment of tyrosine to tRNA(Tyr) in a two-step reaction: tyrosine is first activated by ATP to form Tyr-AMP and then transferred to the acceptor end of tRNA(Tyr). This is Tyrosine--tRNA ligase, mitochondrial from Schizosaccharomyces pombe (strain 972 / ATCC 24843) (Fission yeast).